The primary structure comprises 138 residues: Protein Rrf1 (138 aa).

In terms of domain architecture, Response regulatory spans 4 to 116; sequence RILVVQEDPD…LLLALVDRAL (113 aa). 4-aspartylphosphate is present on residues Asp13 and Asp53.

Functionally, may be involved in regulation of gene transcription. Belongs to the family of response regulators, and members of this family involved in the regulation of gene transcription are two-domain proteins. This protein contains only the N-terminal phosphorylation domain and not the C-terminal DNA-binding domain but it may bind to Rrf2 protein and the latter may bind to DNA. The polypeptide is Protein Rrf1 (rrf1) (Nitratidesulfovibrio vulgaris (strain ATCC 29579 / DSM 644 / CCUG 34227 / NCIMB 8303 / VKM B-1760 / Hildenborough) (Desulfovibrio vulgaris)).